The following is a 164-amino-acid chain: ATP synthase subunit b 1 (164 aa).

The chain crosses the membrane as a helical span at residues 8-28; sequence AETWVAVGFAILMVVFVYFGV.

This sequence belongs to the ATPase B chain family. In terms of assembly, F-type ATPases have 2 components, F(1) - the catalytic core - and F(0) - the membrane proton channel. F(1) has five subunits: alpha(3), beta(3), gamma(1), delta(1), epsilon(1). F(0) has three main subunits: a(1), b(2) and c(10-14). The alpha and beta chains form an alternating ring which encloses part of the gamma chain. F(1) is attached to F(0) by a central stalk formed by the gamma and epsilon chains, while a peripheral stalk is formed by the delta and b chains.

The protein localises to the cell inner membrane. Functionally, f(1)F(0) ATP synthase produces ATP from ADP in the presence of a proton or sodium gradient. F-type ATPases consist of two structural domains, F(1) containing the extramembraneous catalytic core and F(0) containing the membrane proton channel, linked together by a central stalk and a peripheral stalk. During catalysis, ATP synthesis in the catalytic domain of F(1) is coupled via a rotary mechanism of the central stalk subunits to proton translocation. In terms of biological role, component of the F(0) channel, it forms part of the peripheral stalk, linking F(1) to F(0). This chain is ATP synthase subunit b 1, found in Rhodopseudomonas palustris (strain BisA53).